Here is a 119-residue protein sequence, read N- to C-terminus: Vitelline membrane protein Vm34Ca (119 aa).

An N-terminal signal peptide occupies residues 1–19; it reads MKCIAIVSTICLLAAFVAA. The VM domain maps to 69 to 106; it reads SIPAPPCPKNYLFSCQPNLAPVPCSAPAPSYGSAGAYS.

The protein belongs to the vitelline membrane protein family. In terms of tissue distribution, follicle cells.

Its subcellular location is the secreted. Major early eggshell protein. The protein is Vitelline membrane protein Vm34Ca (Vm34Ca) of Drosophila melanogaster (Fruit fly).